The primary structure comprises 156 residues: Calglandulin (156 aa).

4 EF-hand domains span residues 8–43, 44–79, 82–117, and 118–153; these read EQIT…VGIN, PTKR…YHEK, NQDE…AGEP, and LNEQ…ESFK. Ca(2+) is bound by residues Asp-131, Asp-133, Asp-135, Thr-137, and Glu-142.

It belongs to the calmodulin family. Calglandulin subfamily. As to expression, expressed by the venom gland.

It is found in the cytoplasm. Its function is as follows. May be involved in the cellular control mechanism of the secretion of toxins from the gland into the venom. The polypeptide is Calglandulin (Bothrops insularis (Golden lancehead)).